A 362-amino-acid polypeptide reads, in one-letter code: Phosphoserine aminotransferase (362 aa).

R43 is an L-glutamate binding site. Residues 77-78 (AT), W103, T153, D173, and Q196 each bind pyridoxal 5'-phosphate. At K197 the chain carries N6-(pyridoxal phosphate)lysine. 238-239 (NT) serves as a coordination point for pyridoxal 5'-phosphate.

This sequence belongs to the class-V pyridoxal-phosphate-dependent aminotransferase family. SerC subfamily. In terms of assembly, homodimer. Pyridoxal 5'-phosphate is required as a cofactor.

It is found in the cytoplasm. It carries out the reaction O-phospho-L-serine + 2-oxoglutarate = 3-phosphooxypyruvate + L-glutamate. It catalyses the reaction 4-(phosphooxy)-L-threonine + 2-oxoglutarate = (R)-3-hydroxy-2-oxo-4-phosphooxybutanoate + L-glutamate. The protein operates within amino-acid biosynthesis; L-serine biosynthesis; L-serine from 3-phospho-D-glycerate: step 2/3. It functions in the pathway cofactor biosynthesis; pyridoxine 5'-phosphate biosynthesis; pyridoxine 5'-phosphate from D-erythrose 4-phosphate: step 3/5. In terms of biological role, catalyzes the reversible conversion of 3-phosphohydroxypyruvate to phosphoserine and of 3-hydroxy-2-oxo-4-phosphonooxybutanoate to phosphohydroxythreonine. This Xylella fastidiosa (strain 9a5c) protein is Phosphoserine aminotransferase.